Reading from the N-terminus, the 107-residue chain is UPF0102 protein Tlet_0667 (107 aa).

The protein belongs to the UPF0102 family.

The chain is UPF0102 protein Tlet_0667 from Pseudothermotoga lettingae (strain ATCC BAA-301 / DSM 14385 / NBRC 107922 / TMO) (Thermotoga lettingae).